Reading from the N-terminus, the 124-residue chain is Fluoride-specific ion channel FluC 2 (124 aa).

A run of 3 helical transmembrane segments spans residues 36 to 56, 66 to 86, and 100 to 120; these read TFLI…YLAF, LFVM…SLDT, and LYAI…LALV. Positions 74 and 77 each coordinate Na(+).

The protein belongs to the fluoride channel Fluc/FEX (TC 1.A.43) family.

It localises to the cell inner membrane. It carries out the reaction fluoride(in) = fluoride(out). Na(+) is not transported, but it plays an essential structural role and its presence is essential for fluoride channel function. Its function is as follows. Fluoride-specific ion channel. Important for reducing fluoride concentration in the cell, thus reducing its toxicity. The chain is Fluoride-specific ion channel FluC 2 from Nitrobacter hamburgensis (strain DSM 10229 / NCIMB 13809 / X14).